Reading from the N-terminus, the 164-residue chain is Large ribosomal subunit protein uL15 (164 aa).

Disordered regions lie at residues 1–49 (MTKL…SIAG) and 143–164 (EKAG…SAEA). Residues 22-36 (RGPGSGKGKTAGRGV) show a composition bias toward gly residues.

Belongs to the universal ribosomal protein uL15 family. In terms of assembly, part of the 50S ribosomal subunit.

Functionally, binds to the 23S rRNA. This Phenylobacterium zucineum (strain HLK1) protein is Large ribosomal subunit protein uL15.